The primary structure comprises 278 residues: Orotidine 5'-phosphate decarboxylase (278 aa).

Residues aspartate 40, lysine 62–histidine 64, aspartate 93–threonine 102, tyrosine 229, and arginine 247 contribute to the substrate site. Residue lysine 95 is the Proton donor of the active site.

This sequence belongs to the OMP decarboxylase family.

The catalysed reaction is orotidine 5'-phosphate + H(+) = UMP + CO2. Its pathway is pyrimidine metabolism; UMP biosynthesis via de novo pathway; UMP from orotate: step 2/2. The sequence is that of Orotidine 5'-phosphate decarboxylase (pyrG) from Aspergillus fumigatus (strain ATCC MYA-4609 / CBS 101355 / FGSC A1100 / Af293) (Neosartorya fumigata).